A 138-amino-acid polypeptide reads, in one-letter code: Acidic phospholipase A2 2 (138 aa).

The signal sequence occupies residues 1–16 (MRTLWIVAVWLTGVEG). 7 cysteine pairs are disulfide-bonded: Cys42/Cys131, Cys44/Cys60, Cys59/Cys111, Cys65/Cys138, Cys66/Cys104, Cys73/Cys97, and Cys91/Cys102. Tyr43, Gly45, and Gly47 together coordinate Ca(2+). His63 is an active-site residue. A Ca(2+)-binding site is contributed by Asp64. Asp105 is a catalytic residue.

As to quaternary structure, monomer. Requires Ca(2+) as cofactor. Expressed by the venom gland.

The protein resides in the secreted. The catalysed reaction is a 1,2-diacyl-sn-glycero-3-phosphocholine + H2O = a 1-acyl-sn-glycero-3-phosphocholine + a fatty acid + H(+). In terms of biological role, snake venom phospholipase that inhibits ADP- and collagen-induced human platelet aggregation. This inhibition is completely inhibited by abolition of catalytic activity in case of collagen as inducer and partially inhibited in case of ADP as inducer. PLA2 catalyzes the calcium-dependent hydrolysis of the 2-acyl groups in 3-sn-phosphoglycerides. The sequence is that of Acidic phospholipase A2 2 from Macrovipera lebetinus (Levantine viper).